The primary structure comprises 480 residues: tRNA (uracil-5-)-methyltransferase homolog B (480 aa).

3 residues coordinate S-adenosyl-L-methionine: Gln-299, Glu-349, and Asn-399. Cys-427 serves as the catalytic Nucleophile. The active-site Proton acceptor is Glu-473.

Belongs to the class I-like SAM-binding methyltransferase superfamily. RNA M5U methyltransferase family.

It localises to the mitochondrion. It carries out the reaction uridine(54) in tRNA + S-adenosyl-L-methionine = 5-methyluridine(54) in tRNA + S-adenosyl-L-homocysteine + H(+). The enzyme catalyses a uridine in 12S rRNA + S-adenosyl-L-methionine = a 5-methyluridine in 12S rRNA + S-adenosyl-L-homocysteine + H(+). Mitochondrial S-adenosyl-L-methionine-dependent methyltransferase that catalyzes the formation of 5-methyl-uridine in tRNAs and 12S rRNA. Catalyzes the methylation of uridine at position 54 (m5U54) in all tRNAs. Specifically methylates the uridine in position 429 of 12S rRNA (m5U429). Does not affect RNA stability or mitochondrial translation. This Danio rerio (Zebrafish) protein is tRNA (uracil-5-)-methyltransferase homolog B (trmt2b).